The following is a 133-amino-acid chain: UPF0344 protein SE_0666 (133 aa).

The next 4 membrane-spanning stretches (helical) occupy residues M1–L21, L42–A62, M71–I91, and F103–W123.

This sequence belongs to the UPF0344 family.

Its subcellular location is the cell membrane. This chain is UPF0344 protein SE_0666, found in Staphylococcus epidermidis (strain ATCC 12228 / FDA PCI 1200).